The primary structure comprises 944 residues: Protein translocase subunit SecA (944 aa).

Residues Gln96, 114 to 118 (GEGKT), and Asp554 each bind ATP.

This sequence belongs to the SecA family. Monomer and homodimer. Part of the essential Sec protein translocation apparatus which comprises SecA, SecYEG and auxiliary proteins SecDF. Other proteins may also be involved.

It localises to the cell inner membrane. The protein localises to the cytoplasm. The enzyme catalyses ATP + H2O + cellular proteinSide 1 = ADP + phosphate + cellular proteinSide 2.. Its function is as follows. Part of the Sec protein translocase complex. Interacts with the SecYEG preprotein conducting channel. Has a central role in coupling the hydrolysis of ATP to the transfer of proteins into and across the cell membrane, serving as an ATP-driven molecular motor driving the stepwise translocation of polypeptide chains across the membrane. The protein is Protein translocase subunit SecA of Hydrogenobaculum sp. (strain Y04AAS1).